The sequence spans 499 residues: Aspartyl/glutamyl-tRNA(Asn/Gln) amidotransferase subunit B (499 aa).

Belongs to the GatB/GatE family. GatB subfamily. As to quaternary structure, heterotrimer of A, B and C subunits.

It carries out the reaction L-glutamyl-tRNA(Gln) + L-glutamine + ATP + H2O = L-glutaminyl-tRNA(Gln) + L-glutamate + ADP + phosphate + H(+). It catalyses the reaction L-aspartyl-tRNA(Asn) + L-glutamine + ATP + H2O = L-asparaginyl-tRNA(Asn) + L-glutamate + ADP + phosphate + 2 H(+). In terms of biological role, allows the formation of correctly charged Asn-tRNA(Asn) or Gln-tRNA(Gln) through the transamidation of misacylated Asp-tRNA(Asn) or Glu-tRNA(Gln) in organisms which lack either or both of asparaginyl-tRNA or glutaminyl-tRNA synthetases. The reaction takes place in the presence of glutamine and ATP through an activated phospho-Asp-tRNA(Asn) or phospho-Glu-tRNA(Gln). This is Aspartyl/glutamyl-tRNA(Asn/Gln) amidotransferase subunit B from Mesorhizobium japonicum (strain LMG 29417 / CECT 9101 / MAFF 303099) (Mesorhizobium loti (strain MAFF 303099)).